The following is a 582-amino-acid chain: Glutaredoxin domain-containing cysteine-rich protein CG12206 (582 aa).

Residues 217-227 are compositionally biased toward polar residues; that stretch reads CETLDSGTGSD. 2 disordered regions span residues 217 to 244 and 260 to 300; these read CETL…VRSP and EADH…SCDS. The span at 291–300 shows a compositional bias: low complexity; that stretch reads SSNSSLSCDS. In terms of domain architecture, Glutaredoxin spans 423 to 528; it reads NVKNYMEKDV…QLLRPYKSIA (106 aa).

It belongs to the GRXCR1 family.

This is Glutaredoxin domain-containing cysteine-rich protein CG12206 from Drosophila melanogaster (Fruit fly).